A 71-amino-acid polypeptide reads, in one-letter code: UPF0346 protein str0441 (71 aa).

Belongs to the UPF0346 family.

This is UPF0346 protein str0441 from Streptococcus thermophilus (strain CNRZ 1066).